The primary structure comprises 203 residues: Small ribosomal subunit protein uS4 (203 aa).

A disordered region spans residues 20 to 45; the sequence is LPGLTRKRPKNTNPPGMHGAERKKKS. The region spanning 92-155 is the S4 RNA-binding domain; that stretch reads MRLDCIVFRL…SSRKLVAAYA (64 aa).

The protein belongs to the universal ribosomal protein uS4 family. As to quaternary structure, part of the 30S ribosomal subunit. Contacts protein S5. The interaction surface between S4 and S5 is involved in control of translational fidelity.

One of the primary rRNA binding proteins, it binds directly to 16S rRNA where it nucleates assembly of the body of the 30S subunit. Functionally, with S5 and S12 plays an important role in translational accuracy. The sequence is that of Small ribosomal subunit protein uS4 from Synechococcus sp. (strain JA-3-3Ab) (Cyanobacteria bacterium Yellowstone A-Prime).